Consider the following 308-residue polypeptide: MGNTLGLAPMGTLPRRSHRREEPLPNPGSFDELHRLCKDVFPAQMEGVKLVVNKVLSSHFQVAHTVHMSALGLPGYHLHTAYAGDWQLSPTEVFPTVVGDMDSSGSLNAQVLLLLAERLRAKAVFQTQQAKFLTWQFDGEYRGDDYTATLTLGNPDLIGESVIMVAHFLQSITHRLVLGGELVYHRRPGEEGAILTLAGKYSAVHWVATLNVGSGGAHASYYHKANEQVQVGVEFEANTRLQDTTFSFGYHLTLPQADMVFRGLVDSNWCVGAVLEKKMRPLPVTLALGAFLNHWRNRFHCGFSITVG.

Positions methionine 1 to serine 29 are disordered. A required for mitochondrial targeting region spans residues proline 281–glycine 308.

This sequence belongs to the Tom40 family. As to quaternary structure, forms part of the preprotein translocase of the outer mitochondrial membrane (TOM complex) containing TOMM22, TOMM40, TOMM40L and TOMM70. Interacts with mitochondrial targeting sequences.

It is found in the mitochondrion outer membrane. Functionally, potential channel-forming protein implicated in import of protein precursors into mitochondria. The sequence is that of Mitochondrial import receptor subunit TOM40B (Tomm40l) from Mus musculus (Mouse).